Here is a 311-residue protein sequence, read N- to C-terminus: tRNA dimethylallyltransferase (311 aa).

ATP is bound at residue 16-23 (GATASGKS). Residue 18–23 (TASGKS) coordinates substrate. 2 interaction with substrate tRNA regions span residues 41–44 (DSRQ) and 165–169 (QRLIR).

This sequence belongs to the IPP transferase family. As to quaternary structure, monomer. The cofactor is Mg(2+).

It catalyses the reaction adenosine(37) in tRNA + dimethylallyl diphosphate = N(6)-dimethylallyladenosine(37) in tRNA + diphosphate. In terms of biological role, catalyzes the transfer of a dimethylallyl group onto the adenine at position 37 in tRNAs that read codons beginning with uridine, leading to the formation of N6-(dimethylallyl)adenosine (i(6)A). The sequence is that of tRNA dimethylallyltransferase from Chlorobium chlorochromatii (strain CaD3).